Consider the following 299-residue polypeptide: Probable lipid kinase YegS (299 aa).

In terms of domain architecture, DAGKc spans 2-133 (AEFPASLLIL…IDMAQVNKQT (132 aa)). ATP-binding positions include Thr-40, 66–72 (GDGTINE), and Thr-95. Positions 215, 218, and 220 each coordinate Mg(2+). The active-site Proton acceptor is the Glu-271.

The protein belongs to the diacylglycerol/lipid kinase family. YegS lipid kinase subfamily. Mg(2+) is required as a cofactor. Ca(2+) serves as cofactor.

It localises to the cytoplasm. In terms of biological role, probably phosphorylates lipids; the in vivo substrate is unknown. In Shigella boydii serotype 18 (strain CDC 3083-94 / BS512), this protein is Probable lipid kinase YegS.